Consider the following 487-residue polypeptide: UDP-N-acetylmuramate--L-alanine ligase (487 aa).

126 to 132 (GTHGKTT) serves as a coordination point for ATP.

It belongs to the MurCDEF family.

Its subcellular location is the cytoplasm. The enzyme catalyses UDP-N-acetyl-alpha-D-muramate + L-alanine + ATP = UDP-N-acetyl-alpha-D-muramoyl-L-alanine + ADP + phosphate + H(+). It participates in cell wall biogenesis; peptidoglycan biosynthesis. Functionally, cell wall formation. The chain is UDP-N-acetylmuramate--L-alanine ligase from Proteus mirabilis (strain HI4320).